The chain runs to 126 residues: Hydrogenase maturation factor HypA (126 aa).

His2 provides a ligand contact to Ni(2+). Residues Cys78, Cys81, Cys97, and Cys100 each contribute to the Zn(2+) site.

The protein belongs to the HypA/HybF family.

Its function is as follows. Involved in the maturation of [NiFe] hydrogenases. Required for nickel insertion into the metal center of the hydrogenase. The polypeptide is Hydrogenase maturation factor HypA (Methanococcus maripaludis (strain DSM 14266 / JCM 13030 / NBRC 101832 / S2 / LL)).